Consider the following 284-residue polypeptide: L-ribulose-5-phosphate 3-epimerase UlaE (284 aa).

It belongs to the L-ribulose-5-phosphate 3-epimerase family.

The catalysed reaction is L-ribulose 5-phosphate = L-xylulose 5-phosphate. It participates in cofactor degradation; L-ascorbate degradation; D-xylulose 5-phosphate from L-ascorbate: step 3/4. Its function is as follows. Catalyzes the isomerization of L-xylulose-5-phosphate to L-ribulose-5-phosphate. Is involved in the anaerobic L-ascorbate utilization. This Escherichia coli O8 (strain IAI1) protein is L-ribulose-5-phosphate 3-epimerase UlaE.